Here is a 361-residue protein sequence, read N- to C-terminus: tRNA 2-selenouridine synthase (361 aa).

The Rhodanese domain maps to 11–134; that stretch reads LIADTPLIDV…LRQTAIQATW (124 aa). The active-site S-selanylcysteine intermediate is the C94.

The protein belongs to the SelU family. As to quaternary structure, monomer.

It catalyses the reaction 5-methylaminomethyl-2-thiouridine(34) in tRNA + selenophosphate + (2E)-geranyl diphosphate + H2O + H(+) = 5-methylaminomethyl-2-selenouridine(34) in tRNA + (2E)-thiogeraniol + phosphate + diphosphate. It carries out the reaction 5-methylaminomethyl-2-thiouridine(34) in tRNA + (2E)-geranyl diphosphate = 5-methylaminomethyl-S-(2E)-geranyl-thiouridine(34) in tRNA + diphosphate. The catalysed reaction is 5-methylaminomethyl-S-(2E)-geranyl-thiouridine(34) in tRNA + selenophosphate + H(+) = 5-methylaminomethyl-2-(Se-phospho)selenouridine(34) in tRNA + (2E)-thiogeraniol. The enzyme catalyses 5-methylaminomethyl-2-(Se-phospho)selenouridine(34) in tRNA + H2O = 5-methylaminomethyl-2-selenouridine(34) in tRNA + phosphate. Functionally, involved in the post-transcriptional modification of the uridine at the wobble position (U34) of tRNA(Lys), tRNA(Glu) and tRNA(Gln). Catalyzes the conversion of 2-thiouridine (S2U-RNA) to 2-selenouridine (Se2U-RNA). Acts in a two-step process involving geranylation of 2-thiouridine (S2U) to S-geranyl-2-thiouridine (geS2U) and subsequent selenation of the latter derivative to 2-selenouridine (Se2U) in the tRNA chain. In Salmonella arizonae (strain ATCC BAA-731 / CDC346-86 / RSK2980), this protein is tRNA 2-selenouridine synthase.